Consider the following 369-residue polypeptide: Anhydro-N-acetylmuramic acid kinase (369 aa).

Residue 12-19 (GTSLDGVD) coordinates ATP.

It belongs to the anhydro-N-acetylmuramic acid kinase family.

It catalyses the reaction 1,6-anhydro-N-acetyl-beta-muramate + ATP + H2O = N-acetyl-D-muramate 6-phosphate + ADP + H(+). It participates in amino-sugar metabolism; 1,6-anhydro-N-acetylmuramate degradation. Its pathway is cell wall biogenesis; peptidoglycan recycling. Catalyzes the specific phosphorylation of 1,6-anhydro-N-acetylmuramic acid (anhMurNAc) with the simultaneous cleavage of the 1,6-anhydro ring, generating MurNAc-6-P. Is required for the utilization of anhMurNAc either imported from the medium or derived from its own cell wall murein, and thus plays a role in cell wall recycling. The protein is Anhydro-N-acetylmuramic acid kinase of Escherichia coli O157:H7.